The following is a 204-amino-acid chain: Lymphotoxin-alpha (204 aa).

The signal sequence occupies residues 1 to 33 (MTPPGRLYLRRVCSTPILLLLGLLLALPPEAQG). Residues 62 to 204 (PAAHLVGDPS…SSVFFGAFAL (143 aa)) form the THD domain. Residue N95 is glycosylated (N-linked (GlcNAc...) asparagine). C119 and C155 are joined by a disulfide.

This sequence belongs to the tumor necrosis factor family. As to quaternary structure, homotrimer, and heterotrimer of either two LTB and one LTA subunits or (less prevalent) two LTA and one LTB subunits. Interacts with TNFRSF14.

It is found in the secreted. The protein localises to the membrane. Functionally, cytokine that in its homotrimeric form binds to TNFRSF1A/TNFR1, TNFRSF1B/TNFBR and TNFRSF14/HVEM. In its heterotrimeric form with LTB binds to TNFRSF3/LTBR. Lymphotoxin is produced by lymphocytes and is cytotoxic for a wide range of tumor cells in vitro and in vivo. This is Lymphotoxin-alpha (LTA) from Sus scrofa (Pig).